A 294-amino-acid chain; its full sequence is tRNA pseudouridine synthase B (294 aa).

The Nucleophile role is filled by D40.

It belongs to the pseudouridine synthase TruB family. Type 1 subfamily.

It catalyses the reaction uridine(55) in tRNA = pseudouridine(55) in tRNA. Functionally, responsible for synthesis of pseudouridine from uracil-55 in the psi GC loop of transfer RNAs. The polypeptide is tRNA pseudouridine synthase B (Synechococcus elongatus (strain ATCC 33912 / PCC 7942 / FACHB-805) (Anacystis nidulans R2)).